The chain runs to 843 residues: Urease (843 aa).

One can recognise a Urease domain in the interval glycine 400–phenylalanine 843. The Ni(2+) site is built by histidine 405, histidine 407, and lysine 488. The residue at position 488 (lysine 488) is an N6-carboxylysine. Residue histidine 490 coordinates substrate. Histidine 517 and histidine 543 together coordinate Ni(2+). The active-site Proton donor is histidine 591. Position 631 (aspartate 631) interacts with Ni(2+).

The protein in the C-terminal section; belongs to the metallo-dependent hydrolases superfamily. Urease alpha subunit family. As to quaternary structure, homohexamer. Other oligomeric forms may exist depending on pH and presence of salts. Ni(2+) serves as cofactor. Post-translationally, carboxylation allows a single lysine to coordinate two nickel ions.

It carries out the reaction urea + 2 H2O + H(+) = hydrogencarbonate + 2 NH4(+). It participates in nitrogen metabolism; urea degradation; CO(2) and NH(3) from urea (urease route): step 1/1. Urea hydrolase involved in nitrogen recycling from ureide, purine, and arginine catabolism. This Oryza sativa subsp. indica (Rice) protein is Urease.